A 426-amino-acid polypeptide reads, in one-letter code: Glutamyl-tRNA reductase (426 aa).

Residues 52-55, Ser110, 115-117, and Gln121 contribute to the substrate site; these read TCNR and EYE. Catalysis depends on Cys53, which acts as the Nucleophile. 190–195 contacts NADP(+); it reads GAGEMA.

Belongs to the glutamyl-tRNA reductase family. In terms of assembly, homodimer.

The enzyme catalyses (S)-4-amino-5-oxopentanoate + tRNA(Glu) + NADP(+) = L-glutamyl-tRNA(Glu) + NADPH + H(+). It participates in porphyrin-containing compound metabolism; protoporphyrin-IX biosynthesis; 5-aminolevulinate from L-glutamyl-tRNA(Glu): step 1/2. Catalyzes the NADPH-dependent reduction of glutamyl-tRNA(Glu) to glutamate 1-semialdehyde (GSA). This chain is Glutamyl-tRNA reductase, found in Saccharolobus solfataricus (strain ATCC 35092 / DSM 1617 / JCM 11322 / P2) (Sulfolobus solfataricus).